Reading from the N-terminus, the 166-residue chain is Transmembrane protein 278 (166 aa).

Over residues 1-15 the composition is skewed to acidic residues; sequence MSDQERETEEDEGGD. The segment at 1-28 is disordered; that stretch reads MSDQERETEEDEGGDPSDTAPMLPQRLP. Transmembrane regions (helical) follow at residues 39–59, 65–85, and 111–131; these read GWASLAARGLGTLLFQGWALA, LLLPAAVFLLVLLPAAAVVYL, and AAVIVLGFLSLPPLLVLASAA.

Belongs to the TMEM88 family.

The protein localises to the membrane. This Bos taurus (Bovine) protein is Transmembrane protein 278 (TMEM278).